Reading from the N-terminus, the 87-residue chain is Large ribosomal subunit protein bL27 (87 aa).

Residues Met1 to Tyr26 form a disordered region.

It belongs to the bacterial ribosomal protein bL27 family.

The protein is Large ribosomal subunit protein bL27 of Prochlorococcus marinus (strain SARG / CCMP1375 / SS120).